Here is a 137-residue protein sequence, read N- to C-terminus: ATP synthase epsilon chain, chloroplastic (137 aa).

Belongs to the ATPase epsilon chain family. F-type ATPases have 2 components, CF(1) - the catalytic core - and CF(0) - the membrane proton channel. CF(1) has five subunits: alpha(3), beta(3), gamma(1), delta(1), epsilon(1). CF(0) has three main subunits: a, b and c.

It is found in the plastid. It localises to the chloroplast thylakoid membrane. Its function is as follows. Produces ATP from ADP in the presence of a proton gradient across the membrane. This Pinus koraiensis (Korean pine) protein is ATP synthase epsilon chain, chloroplastic.